Here is a 257-residue protein sequence, read N- to C-terminus: tRNA pseudouridine synthase A (257 aa).

The active-site Nucleophile is D53. Y111 contributes to the substrate binding site.

The protein belongs to the tRNA pseudouridine synthase TruA family. Homodimer.

The enzyme catalyses uridine(38/39/40) in tRNA = pseudouridine(38/39/40) in tRNA. In terms of biological role, formation of pseudouridine at positions 38, 39 and 40 in the anticodon stem and loop of transfer RNAs. This chain is tRNA pseudouridine synthase A, found in Xanthomonas axonopodis pv. citri (strain 306).